Here is a 366-residue protein sequence, read N- to C-terminus: MSAHRDAIRTARSVVVKIGTTALTTPTGVFDTSRLQDLADAIEARMKAGSDVVIVSSGAIAAGIEPLGLTKRPTDLATKQAAASVGQVALVNTWSSAFGRYHRTVGQVLLTAHDISMRVQHTNAQRTLDRLRALHAVAIVNENDTVATNEIRFGDNDRLSALVAHLVGADALILLSDVDGLYDSDPRKGNARFIPEVDGPDDLEGVTAGRGSHLGTGGMVSKLSSALLAADAGVPVLLAAASDAAAALDGASVGTVFAPRKERMSARRFWVRYAAEASGALTLDDGAVKAVVRQRRSLLPAGITALSGRFYGGDVVELRNQDATMVARGVVAYDAAELATMLGRSTSDLPAEMRRPAVHADDLVAV.

An ATP-binding site is contributed by Lys-17. Substrate-binding residues include Ser-57, Asp-144, and Asn-156. Residues 176–177 and 216–222 contribute to the ATP site; these read SD and TGGMVSK. The PUA domain occupies 278 to 356; that stretch reads SGALTLDDGA…SDLPAEMRRP (79 aa).

This sequence belongs to the glutamate 5-kinase family.

Its subcellular location is the cytoplasm. It catalyses the reaction L-glutamate + ATP = L-glutamyl 5-phosphate + ADP. The protein operates within amino-acid biosynthesis; L-proline biosynthesis; L-glutamate 5-semialdehyde from L-glutamate: step 1/2. In terms of biological role, catalyzes the transfer of a phosphate group to glutamate to form L-glutamate 5-phosphate. This is Glutamate 5-kinase from Mycolicibacterium vanbaalenii (strain DSM 7251 / JCM 13017 / BCRC 16820 / KCTC 9966 / NRRL B-24157 / PYR-1) (Mycobacterium vanbaalenii).